An 80-amino-acid chain; its full sequence is Metallothionein-like protein 1 (80 aa).

The protein belongs to the metallothionein superfamily. Type 15 family.

Its function is as follows. Metallothioneins have a high content of cysteine residues that bind various heavy metals. The polypeptide is Metallothionein-like protein 1 (METAL1) (Coffea arabica (Arabian coffee)).